The sequence spans 313 residues: Methionyl-tRNA formyltransferase (313 aa).

Ser-110–Pro-113 contributes to the (6S)-5,6,7,8-tetrahydrofolate binding site.

The protein belongs to the Fmt family.

The catalysed reaction is L-methionyl-tRNA(fMet) + (6R)-10-formyltetrahydrofolate = N-formyl-L-methionyl-tRNA(fMet) + (6S)-5,6,7,8-tetrahydrofolate + H(+). Its function is as follows. Attaches a formyl group to the free amino group of methionyl-tRNA(fMet). The formyl group appears to play a dual role in the initiator identity of N-formylmethionyl-tRNA by promoting its recognition by IF2 and preventing the misappropriation of this tRNA by the elongation apparatus. The sequence is that of Methionyl-tRNA formyltransferase from Lysinibacillus sphaericus (strain C3-41).